Reading from the N-terminus, the 734-residue chain is E3 ubiquitin-protein ligase TRIM56 (734 aa).

The segment at 21-60 (CKICLEQLHTPKTLPCLHTYCQDCLAQLDIGGQVRCPECR) adopts an RING-type zinc-finger fold. 2 B box-type zinc fingers span residues 98-149 (KPTC…VVDL) and 164-205 (RQAS…CLPL). The Zn(2+) site is built by Cys-169, His-172, Cys-192, and His-197. Positions 215–303 (GLEELLAGVD…KIERQEQVAK (89 aa)) form a coiled coil. Basic and acidic residues predominate over residues 372–381 (EPKQSPKDSG). Residues 372-463 (EPKQSPKDSG…SPILRPNLEG (92 aa)) are disordered. Residues 435 to 448 (RPNKKKKCKGRGKS) show a composition bias toward basic residues. Ser-454 bears the Phosphoserine mark.

It belongs to the TRIM/RBCC family. In terms of assembly, interacts with STING1. Interacts with TICAM1.

It is found in the cytoplasm. It catalyses the reaction S-ubiquitinyl-[E2 ubiquitin-conjugating enzyme]-L-cysteine + [acceptor protein]-L-lysine = [E2 ubiquitin-conjugating enzyme]-L-cysteine + N(6)-ubiquitinyl-[acceptor protein]-L-lysine.. It functions in the pathway protein modification; protein ubiquitination. Functionally, E3 ubiquitin-protein ligase that plays a key role in innate antiviral immunity by mediating ubiquitination of CGAS and STING1. In response to pathogen- and host-derived double-stranded DNA (dsDNA), targets STING1 to 'Lys-63'-linked ubiquitination, thereby promoting its homodimerization, a step required for the production of type I interferon IFN-beta. Also mediates monoubiquitination of CGAS, thereby promoting CGAS oligomerization and subsequent activation. Independently of its E3 ubiquitin ligase activity, positive regulator of TLR3 signaling. Potentiates extracellular double stranded RNA (dsRNA)-induced expression of IFNB1 and interferon-stimulated genes ISG15, IFIT1/ISG56, CXCL10, OASL and CCL5/RANTES. In Mus musculus (Mouse), this protein is E3 ubiquitin-protein ligase TRIM56.